Here is a 1413-residue protein sequence, read N- to C-terminus: DNA-directed RNA polymerase subunit beta' (1413 aa).

Zn(2+) is bound by residues cysteine 70, cysteine 72, cysteine 85, and cysteine 88. The Mg(2+) site is built by aspartate 460, aspartate 462, and aspartate 464. Zn(2+)-binding residues include cysteine 814, cysteine 888, cysteine 895, and cysteine 898.

The protein belongs to the RNA polymerase beta' chain family. As to quaternary structure, the RNAP catalytic core consists of 2 alpha, 1 beta, 1 beta' and 1 omega subunit. When a sigma factor is associated with the core the holoenzyme is formed, which can initiate transcription. Mg(2+) serves as cofactor. Requires Zn(2+) as cofactor.

It carries out the reaction RNA(n) + a ribonucleoside 5'-triphosphate = RNA(n+1) + diphosphate. Its function is as follows. DNA-dependent RNA polymerase catalyzes the transcription of DNA into RNA using the four ribonucleoside triphosphates as substrates. The protein is DNA-directed RNA polymerase subunit beta' of Buchnera aphidicola subsp. Schizaphis graminum (strain Sg).